The chain runs to 130 residues: Small ribosomal subunit protein uS8 (130 aa).

Belongs to the universal ribosomal protein uS8 family. In terms of assembly, part of the 30S ribosomal subunit. Contacts proteins S5 and S12.

In terms of biological role, one of the primary rRNA binding proteins, it binds directly to 16S rRNA central domain where it helps coordinate assembly of the platform of the 30S subunit. This is Small ribosomal subunit protein uS8 from Phytoplasma mali (strain AT).